The sequence spans 102 residues: Small ribosomal subunit protein uS10 (102 aa).

The protein belongs to the universal ribosomal protein uS10 family. As to quaternary structure, part of the 30S ribosomal subunit.

Involved in the binding of tRNA to the ribosomes. The protein is Small ribosomal subunit protein uS10 of Methylobacillus flagellatus (strain ATCC 51484 / DSM 6875 / VKM B-1610 / KT).